The following is a 371-amino-acid chain: tRNA-specific 2-thiouridylase MnmA (371 aa).

ATP-binding positions include 24 to 31 (AMSGGVDS) and Leu-50. Cys-119 functions as the Nucleophile in the catalytic mechanism. Cys-119 and Cys-215 are disulfide-bonded. Gly-143 serves as a coordination point for ATP. The tract at residues 165–167 (KDQ) is interaction with tRNA. Cys-215 serves as the catalytic Cysteine persulfide intermediate.

The protein belongs to the MnmA/TRMU family.

The protein localises to the cytoplasm. The enzyme catalyses S-sulfanyl-L-cysteinyl-[protein] + uridine(34) in tRNA + AH2 + ATP = 2-thiouridine(34) in tRNA + L-cysteinyl-[protein] + A + AMP + diphosphate + H(+). In terms of biological role, catalyzes the 2-thiolation of uridine at the wobble position (U34) of tRNA, leading to the formation of s(2)U34. The sequence is that of tRNA-specific 2-thiouridylase MnmA from Neorickettsia sennetsu (strain ATCC VR-367 / Miyayama) (Ehrlichia sennetsu).